The chain runs to 746 residues: F-box only protein 30 (746 aa).

The segment at Glu-49 to Ser-110 adopts a TRAF-type zinc-finger fold. 2 disordered regions span residues Met-222 to His-241 and Ile-247 to Gln-266. Over residues Glu-225 to His-241 the composition is skewed to basic and acidic residues. The span at Ser-256–Gln-266 shows a compositional bias: polar residues. Ser-383 carries the post-translational modification Phosphoserine. One can recognise an F-box domain in the interval Ser-611–Ile-659.

As to quaternary structure, part of a SCF (SKP1-cullin-F-box) protein ligase complex. Interacts with SKP1, CUL1 and RBX1/ROC1. Post-translationally, auto-ubiquitinated. May be neddylated. Neddylation may be required for E3 ligase activity, since it was observed only after purification with o-phenanthroline.

The protein operates within protein modification; protein ubiquitination. Substrate-recognition component of the SCF (SKP1-CUL1-F-box protein)-type E3 ubiquitin ligase complex. Required for muscle atrophy following denervation. The protein is F-box only protein 30 (Fbxo30) of Mus musculus (Mouse).